Reading from the N-terminus, the 465-residue chain is Fumarate hydratase class II (465 aa).

Substrate-binding positions include 98–100 (SGT), R126, 129–132 (HPND), 139–141 (SSN), and T187. H188 acts as the Proton donor/acceptor in catalysis. The active site involves S318. Residues S319 and 324-326 (KVN) contribute to the substrate site.

This sequence belongs to the class-II fumarase/aspartase family. Fumarase subfamily. As to quaternary structure, homotetramer.

The protein localises to the cytoplasm. It catalyses the reaction (S)-malate = fumarate + H2O. It functions in the pathway carbohydrate metabolism; tricarboxylic acid cycle; (S)-malate from fumarate: step 1/1. Functionally, involved in the TCA cycle. Catalyzes the stereospecific interconversion of fumarate to L-malate. The chain is Fumarate hydratase class II from Yersinia pestis.